Here is a 665-residue protein sequence, read N- to C-terminus: Ribonuclease R 2 (665 aa).

One can recognise an RNB domain in the interval 202–528 (REDYRNEITY…LIIHRLLHLY (327 aa)). Residues 579–662 (GEVYTGTITG…RKGTVDFEQI (84 aa)) form the S1 motif domain.

This sequence belongs to the RNR ribonuclease family. RNase R subfamily.

Its subcellular location is the cytoplasm. The catalysed reaction is Exonucleolytic cleavage in the 3'- to 5'-direction to yield nucleoside 5'-phosphates.. 3'-5' exoribonuclease that releases 5'-nucleoside monophosphates and is involved in maturation of structured RNAs. The sequence is that of Ribonuclease R 2 from Lactococcus lactis subsp. lactis (strain IL1403) (Streptococcus lactis).